Here is a 220-residue protein sequence, read N- to C-terminus: Ribose-5-phosphate isomerase A (220 aa).

Residues 28–31, 81–84, and 94–97 contribute to the substrate site; these read TGST, DGAD, and KGGG. Catalysis depends on E103, which acts as the Proton acceptor. Position 121 (K121) interacts with substrate.

The protein belongs to the ribose 5-phosphate isomerase family. Homodimer.

The catalysed reaction is aldehydo-D-ribose 5-phosphate = D-ribulose 5-phosphate. Its pathway is carbohydrate degradation; pentose phosphate pathway; D-ribose 5-phosphate from D-ribulose 5-phosphate (non-oxidative stage): step 1/1. Functionally, catalyzes the reversible conversion of ribose-5-phosphate to ribulose 5-phosphate. This Hydrogenovibrio crunogenus (strain DSM 25203 / XCL-2) (Thiomicrospira crunogena) protein is Ribose-5-phosphate isomerase A.